A 319-amino-acid chain; its full sequence is Ribonuclease Z (319 aa).

Zn(2+) is bound by residues H62, H64, D66, H67, H145, D216, and H274. D66 acts as the Proton acceptor in catalysis.

This sequence belongs to the RNase Z family. In terms of assembly, homodimer. Zn(2+) serves as cofactor.

The catalysed reaction is Endonucleolytic cleavage of RNA, removing extra 3' nucleotides from tRNA precursor, generating 3' termini of tRNAs. A 3'-hydroxy group is left at the tRNA terminus and a 5'-phosphoryl group is left at the trailer molecule.. In terms of biological role, zinc phosphodiesterase, which displays some tRNA 3'-processing endonuclease activity. Probably involved in tRNA maturation, by removing a 3'-trailer from precursor tRNA. The protein is Ribonuclease Z of Parasynechococcus marenigrum (strain WH8102).